A 385-amino-acid chain; its full sequence is Centrosomal protein of 44 kDa (385 aa).

The interval 11-191 (RKLEQRLRTL…TKCYKSALLE (181 aa)) is binds with microtubules and centrioles. Positions 194–204 (EEEEPTSDCEE) are enriched in acidic residues. Positions 194-224 (EEEEPTSDCEEDSHLQREMGSPFETAEETPN) are disordered. Coiled coils occupy residues 224–263 (NSEQVELLRKQLAECQEKLQRLDCVEERLQSLETSVKGKI) and 353–379 (TEESKETTKQRMERITKMMEETSELLK).

In terms of assembly, binds to centriolar microtubules.

Its subcellular location is the cytoplasm. The protein resides in the cytoskeleton. It is found in the microtubule organizing center. The protein localises to the centrosome. It localises to the centriole. Its subcellular location is the spindle pole. The protein resides in the midbody. Its function is as follows. Centriole-enriched microtubule-binding protein involved in centriole biogenesis. In collaboration with CEP295 and POC1B, is required for the centriole-to-centrosome conversion by ensuring the formation of bona fide centriole wall. Functions as a linker component that maintains centrosome cohesion. Associates with CROCC and regulates its stability and localization to the centrosome. The protein is Centrosomal protein of 44 kDa (cep44) of Xenopus tropicalis (Western clawed frog).